We begin with the raw amino-acid sequence, 448 residues long: Probable glycine dehydrogenase (decarboxylating) subunit 1 (448 aa).

The protein belongs to the GcvP family. N-terminal subunit subfamily. The glycine cleavage system is composed of four proteins: P, T, L and H. In this organism, the P 'protein' is a heterodimer of two subunits.

It catalyses the reaction N(6)-[(R)-lipoyl]-L-lysyl-[glycine-cleavage complex H protein] + glycine + H(+) = N(6)-[(R)-S(8)-aminomethyldihydrolipoyl]-L-lysyl-[glycine-cleavage complex H protein] + CO2. Its function is as follows. The glycine cleavage system catalyzes the degradation of glycine. The P protein binds the alpha-amino group of glycine through its pyridoxal phosphate cofactor; CO(2) is released and the remaining methylamine moiety is then transferred to the lipoamide cofactor of the H protein. The chain is Probable glycine dehydrogenase (decarboxylating) subunit 1 from Exiguobacterium sibiricum (strain DSM 17290 / CCUG 55495 / CIP 109462 / JCM 13490 / 255-15).